The following is a 1220-amino-acid chain: Deubiquitinating protein VCPIP1 (1220 aa).

The span at 1–19 (MSQPPPPPPLPPPPPPPEA) shows a compositional bias: pro residues. Residues 1-40 (MSQPPPPPPLPPPPPPPEAPQTSSSLAAAASPGGLSKRRD) form a disordered region. The segment covering 20 to 35 (PQTSSSLAAAASPGGL) has biased composition (low complexity). Residues 207–360 (LIPVHVDGDG…RNHYIPLVGI (154 aa)) form the OTU domain. Residue aspartate 215 is part of the active site. Residue cysteine 218 is the Nucleophile of the active site. Histidine 353 is a catalytic residue. N6-acetyllysine is present on lysine 407. 2 disordered regions span residues 724 to 778 (SVMQ…KIRI) and 988 to 1008 (EATT…LGSG). Residues serine 746 and serine 756 each carry the phosphoserine modification. Low complexity predominate over residues 754–770 (PSSAPATPTKAPYSPTT). Residue threonine 762 is modified to Phosphothreonine. 4 positions are modified to phosphoserine: serine 767, serine 993, serine 997, and serine 1076. Disordered stretches follow at residues 1113–1140 (SSIQ…QRKV) and 1185–1220 (FATR…MDHS). Phosphoserine is present on residues serine 1196 and serine 1205. The segment covering 1197–1207 (MEEPEEMDSQD) has biased composition (acidic residues). The span at 1208-1220 (AETTNTTEPMDHS) shows a compositional bias: polar residues.

In terms of assembly, binds VCP and the ternary complex containing STX5A, NSFL1C and VCP. In terms of processing, phosphorylated at Ser-1205 by ATM or ATR following induction of covalent DNA-protein cross-links (DPCs).

It is found in the nucleus. The protein resides in the cytoplasm. The protein localises to the endoplasmic reticulum. Its subcellular location is the golgi apparatus. It localises to the golgi stack. It catalyses the reaction Thiol-dependent hydrolysis of ester, thioester, amide, peptide and isopeptide bonds formed by the C-terminal Gly of ubiquitin (a 76-residue protein attached to proteins as an intracellular targeting signal).. Its function is as follows. Deubiquitinating enzyme involved in DNA repair and reassembly of the Golgi apparatus and the endoplasmic reticulum following mitosis. Necessary for VCP-mediated reassembly of Golgi stacks after mitosis. Plays a role in VCP-mediated formation of transitional endoplasmic reticulum (tER). Mediates dissociation of the ternary complex containing STX5A, NSFL1C and VCP. Also involved in DNA repair following phosphorylation by ATM or ATR: acts by catalyzing deubiquitination of SPRTN, thereby promoting SPRTN recruitment to chromatin and subsequent proteolytic cleavage of covalent DNA-protein cross-links (DPCs). Hydrolyzes 'Lys-11'- and 'Lys-48'-linked polyubiquitin chains. This Mus musculus (Mouse) protein is Deubiquitinating protein VCPIP1.